A 91-amino-acid polypeptide reads, in one-letter code: Large ribosomal subunit protein uL23 (91 aa).

The protein belongs to the universal ribosomal protein uL23 family. As to quaternary structure, part of the 50S ribosomal subunit. Contacts protein L29.

Binds to 23S rRNA. One of the proteins that surrounds the polypeptide exit tunnel on the outside of the ribosome. This Staphylothermus marinus (strain ATCC 43588 / DSM 3639 / JCM 9404 / F1) protein is Large ribosomal subunit protein uL23.